The sequence spans 472 residues: 3-isopropylmalate dehydratase large subunit (472 aa).

[4Fe-4S] cluster is bound by residues Cys-352, Cys-413, and Cys-416.

It belongs to the aconitase/IPM isomerase family. LeuC type 1 subfamily. Heterodimer of LeuC and LeuD. The cofactor is [4Fe-4S] cluster.

The enzyme catalyses (2R,3S)-3-isopropylmalate = (2S)-2-isopropylmalate. The protein operates within amino-acid biosynthesis; L-leucine biosynthesis; L-leucine from 3-methyl-2-oxobutanoate: step 2/4. Its function is as follows. Catalyzes the isomerization between 2-isopropylmalate and 3-isopropylmalate, via the formation of 2-isopropylmaleate. The polypeptide is 3-isopropylmalate dehydratase large subunit (Pseudomonas fluorescens (strain ATCC BAA-477 / NRRL B-23932 / Pf-5)).